A 173-amino-acid chain; its full sequence is MGKPCHFAQFDLQPAFLVDLDELGQRYRELVRSVHPDRFADAPEREQRLALERAAQLNEAYQTLKSAPRRALYLLTLSGHELPLEATVQDPEFLLQQMQLREELEELQDSADLAGVATFKRRLKAAQAELEREFAACWDDAQRREEAERLVRRMQFLDKLAQEVRQLEERLDD.

The J domain maps to 5–77; it reads CHFAQFDLQP…PRRALYLLTL (73 aa).

This sequence belongs to the HscB family. Interacts with HscA and stimulates its ATPase activity.

In terms of biological role, co-chaperone involved in the maturation of iron-sulfur cluster-containing proteins. Seems to help targeting proteins to be folded toward HscA. In Pseudomonas aeruginosa (strain UCBPP-PA14), this protein is Co-chaperone protein HscB homolog.